The sequence spans 85 residues: MYTYLMLTMRTEKFNQEHVAGHYEFLDRLQAEKRLKMFGPFSDATGGAYVIEADSLEEAAEIGHADPLVASGSSELTIKEWKLKK.

This sequence belongs to the YciI family.

This is an uncharacterized protein from Bacillus subtilis (strain 168).